The chain runs to 497 residues: Inactive metallocarboxypeptidase ecm14 (497 aa).

A signal peptide spans 1–28 (MAYNKSLKSLVFILLASQIVFVLFLCYG). The propeptide occupies 29 to 148 (KSSRELGVKW…TLFESIVPDT (120 aa)). Positions 182-492 (SYQNLESINS…AMILYYGEFI (311 aa)) constitute a Peptidase M14 domain. Zn(2+) is bound by residues H248 and E251. Substrate is bound by residues 248–251 (HARE) and 323–324 (DA). C317 and C337 are oxidised to a cystine. Zn(2+) is bound at residue H377. 378-379 (SY) serves as a coordination point for substrate.

The protein belongs to the peptidase M14 family. Zn(2+) serves as cofactor.

It is found in the endoplasmic reticulum. The protein localises to the secreted. Its function is as follows. Inactive carboxypeptidase that may play a role in cell wall organization and biogenesis. This chain is Inactive metallocarboxypeptidase ecm14, found in Schizosaccharomyces pombe (strain 972 / ATCC 24843) (Fission yeast).